The sequence spans 331 residues: Pseudouridylate synthase TRUB2, mitochondrial (331 aa).

The active-site Nucleophile is the aspartate 98. Residues 309–331 form a disordered region; that stretch reads STGQPWGLKDPSSTLELESCSGQ. Residues 319–331 are compositionally biased toward polar residues; that stretch reads PSSTLELESCSGQ.

It belongs to the pseudouridine synthase TruB family. In terms of assembly, forms a regulatory protein-RNA complex, consisting of RCC1L, NGRN, RPUSD3, RPUSD4, TRUB2, FASTKD2 and 16S mt-rRNA.

It is found in the mitochondrion matrix. It catalyses the reaction a uridine in mRNA = a pseudouridine in mRNA. The enzyme catalyses uridine(55) in tRNA = pseudouridine(55) in tRNA. Functionally, minor enzyme contributing to the isomerization of uridine to pseudouridine (pseudouridylation) of specific mitochondrial mRNAs (mt-mRNAs) such as COXI and COXIII mt-mRNAs. As a component of a functional protein-RNA module, consisting of RCC1L, NGRN, RPUSD3, RPUSD4, TRUB2, FASTKD2 and 16S mitochondrial ribosomal RNA (16S mt-rRNA), controls 16S mt-rRNA abundance and is required for intra-mitochondrial translation. Also catalyzes pseudouridylation of some tRNAs, including synthesis of pseudouridine(55) from uracil-55, in the psi GC loop of a subset of tRNAs. This is Pseudouridylate synthase TRUB2, mitochondrial from Mus musculus (Mouse).